Consider the following 366-residue polypeptide: Phosphate acyltransferase (366 aa).

The disordered stretch occupies residues 334–366; that stretch reads ESAKNKETQSKQASTKNTAPKTSETTKESQQSL. The segment covering 343–366 has biased composition (polar residues); that stretch reads SKQASTKNTAPKTSETTKESQQSL.

The protein belongs to the PlsX family. In terms of assembly, homodimer. Probably interacts with PlsY.

It is found in the cytoplasm. It catalyses the reaction a fatty acyl-[ACP] + phosphate = an acyl phosphate + holo-[ACP]. It functions in the pathway lipid metabolism; phospholipid metabolism. In terms of biological role, catalyzes the reversible formation of acyl-phosphate (acyl-PO(4)) from acyl-[acyl-carrier-protein] (acyl-ACP). This enzyme utilizes acyl-ACP as fatty acyl donor, but not acyl-CoA. This chain is Phosphate acyltransferase, found in Onion yellows phytoplasma (strain OY-M).